Reading from the N-terminus, the 424-residue chain is Histidine--tRNA ligase (424 aa).

It belongs to the class-II aminoacyl-tRNA synthetase family. As to quaternary structure, homodimer.

The protein resides in the cytoplasm. The catalysed reaction is tRNA(His) + L-histidine + ATP = L-histidyl-tRNA(His) + AMP + diphosphate + H(+). This Escherichia coli O139:H28 (strain E24377A / ETEC) protein is Histidine--tRNA ligase.